We begin with the raw amino-acid sequence, 164 residues long: UPF0225 protein Shewmr4_2054 (164 aa).

The protein belongs to the UPF0225 family.

This Shewanella sp. (strain MR-4) protein is UPF0225 protein Shewmr4_2054.